The primary structure comprises 704 residues: MDTRFHCVYLLTSLDPQCEGDFYIGYSVNPLRRLRQHNGELVNGARRTGRRGRPWTIVCCVSGFPDDRTALKFEWCWQHPTASARLRHTIDILTGLRRLPYAVATLHLLVRASLFCQLDLTLHIFESAFLQEAAARAEVFLARRRGAFAVGGGLQAESPRVGTQQHSQRSSSLQGQADGVVTPPLPALDSQGELQGASTAAALATTTAASHLLPPLTPSLLLHVENTTREAFEDAYLSHDRCLLLPSAGMGVVVGEAGKEDSHMSASAGTSCPYDVSLLSQAARAEWSNASFASDSDDEDTRRLAPYCPSAGSSTPSPQRVRTAASPALLGYRSEERAGDGVWEASPGSSVGCGAALRSFSSPPPPRESSPRSASRPPVCTGINASASLAVDAPHGDVTAACPSSPAAAPAPQPRIPLRFADYGEVDFARAHAEEQHRLHHGLLPCSLCALPLQPSCLVYCSRAPFCTLRCHLSCLAMWMLYAEAEAAATIDGTDKSPALLSHAPPAPISPLRRLIPSQPCPCPLCGVLLHWGSLVKELKKRVVVERRLHAVQRRIRMEQRWQARLAHIEPTKRSTGAAMRRRQRARVGAAAALAKGAGKVPGAASTVPAPTMHAGPARRDAPRVSSPISFGEPTLTSFAAAASCPSPSASLAALSPTSASPISRHNGHSNTVTATHTAAAAAAASDASLLSLTDFCEEDWLLP.

In terms of domain architecture, GIY-YIG spans 4-90 (RFHCVYLLTS…TASARLRHTI (87 aa)). Disordered regions lie at residues 157-180 (ESPRVGTQQHSQRSSSLQGQADGV), 290-323 (ASFASDSDDEDTRRLAPYCPSAGSSTPSPQRVRT), and 354-378 (GAALRSFSSPPPPRESSPRSASRPP). Composition is skewed to polar residues over residues 161 to 175 (VGTQQHSQRSSSLQG) and 311 to 320 (AGSSTPSPQR). The SLX1-type zinc-finger motif lies at 446–526 (CSLCALPLQP…PSQPCPCPLC (81 aa)). 2 disordered regions span residues 601-629 (VPGAASTVPAPTMHAGPARRDAPRVSSPI) and 650-671 (ASLAALSPTSASPISRHNGHSN). A compositionally biased stretch (low complexity) spans 650-662 (ASLAALSPTSASP).

Belongs to the SLX1 family. As to quaternary structure, forms a heterodimer with a member of the SLX4 family. It depends on a divalent metal cation as a cofactor.

Its subcellular location is the nucleus. Catalytic subunit of a heterodimeric structure-specific endonuclease that resolves DNA secondary structures generated during DNA repair and recombination. Has endonuclease activity towards branched DNA substrates, introducing single-strand cuts in duplex DNA close to junctions with ss-DNA. This chain is Structure-specific endonuclease subunit SLX1 homolog, found in Leishmania major.